Consider the following 295-residue polypeptide: N-acetylmuramic acid 6-phosphate etherase (295 aa).

An SIS domain is found at 53 to 216 (TTEQFKQGGR…STITMVGVGK (164 aa)). Residue Glu81 is the Proton donor of the active site. Glu112 is an active-site residue.

The protein belongs to the GCKR-like family. MurNAc-6-P etherase subfamily. Homodimer.

It catalyses the reaction N-acetyl-D-muramate 6-phosphate + H2O = N-acetyl-D-glucosamine 6-phosphate + (R)-lactate. It functions in the pathway amino-sugar metabolism; N-acetylmuramate degradation. Its function is as follows. Specifically catalyzes the cleavage of the D-lactyl ether substituent of MurNAc 6-phosphate, producing GlcNAc 6-phosphate and D-lactate. The protein is N-acetylmuramic acid 6-phosphate etherase of Staphylococcus saprophyticus subsp. saprophyticus (strain ATCC 15305 / DSM 20229 / NCIMB 8711 / NCTC 7292 / S-41).